Reading from the N-terminus, the 226-residue chain is ATP synthase subunit a (226 aa).

A run of 5 helical transmembrane segments spans residues L18–L38, F74–F94, L100–I120, L158–G180, and I197–L217.

The protein belongs to the ATPase A chain family. As to quaternary structure, F-type ATPases have 2 components, CF(1) - the catalytic core - and CF(0) - the membrane proton channel. CF(1) has five subunits: alpha(3), beta(3), gamma(1), delta(1), epsilon(1). CF(0) has three main subunits: a, b and c.

It is found in the mitochondrion inner membrane. Functionally, mitochondrial membrane ATP synthase (F(1)F(0) ATP synthase or Complex V) produces ATP from ADP in the presence of a proton gradient across the membrane which is generated by electron transport complexes of the respiratory chain. F-type ATPases consist of two structural domains, F(1) - containing the extramembraneous catalytic core and F(0) - containing the membrane proton channel, linked together by a central stalk and a peripheral stalk. During catalysis, ATP synthesis in the catalytic domain of F(1) is coupled via a rotary mechanism of the central stalk subunits to proton translocation. Key component of the proton channel; it may play a direct role in the translocation of protons across the membrane. This is ATP synthase subunit a (mt:ATPase6) from Anopheles gambiae (African malaria mosquito).